The chain runs to 178 residues: Fatty-acid and retinol-binding protein 1 (178 aa).

The first 16 residues, Met-1–Ala-16, serve as a signal peptide directing secretion. N-linked (GlcNAc...) asparagine glycosylation is found at Asn-44 and Asn-75. Coiled coils occupy residues Asp-67–Asn-89 and Lys-123–Ala-153. The N-linked (GlcNAc...) asparagine glycan is linked to Asn-157.

It belongs to the fatty-acid and retinol-binding protein (FARBP) family. N-glycosylated.

Its subcellular location is the secreted. Its function is as follows. Binds retinol and different fatty acids. The chain is Fatty-acid and retinol-binding protein 1 from Acanthocheilonema viteae (Filarial nematode worm).